Here is a 278-residue protein sequence, read N- to C-terminus: OX-2 membrane glycoprotein (278 aa).

The N-terminal stretch at 1–30 (MERLVIRMPFSHLSTYSLVWVMAAVVLCTA) is a signal peptide. The 111-residue stretch at 31 to 141 (QVQVVTQDER…SGTACLTVYV (111 aa)) folds into the Ig-like V-type domain. The Extracellular segment spans residues 31 to 232 (QVQVVTQDER…TDFKQTVNKG (202 aa)). 2 cysteine pairs are disulfide-bonded: Cys51-Cys121 and Cys118-Cys136. Asn95, Asn103, and Asn110 each carry an N-linked (GlcNAc...) asparagine glycan. The 91-residue stretch at 142 to 232 (QPIVSLHYKF…TDFKQTVNKG (91 aa)) folds into the Ig-like C2-type domain. Asn157, Asn181, and Asn190 each carry an N-linked (GlcNAc...) asparagine glycan. Cysteines 160 and 214 form a disulfide. Residues 233-259 (YWFSVPLLLSIVSLVILLVLISILLYW) traverse the membrane as a helical segment. Residues 260-278 (KRHRNQDRGELSQGVQKMT) lie on the Cytoplasmic side of the membrane.

CD200 and CD200R1 interact via their respective N-terminal Ig-like domains.

The protein resides in the cell membrane. Functionally, costimulates T-cell proliferation. May regulate myeloid cell activity in a variety of tissues. This chain is OX-2 membrane glycoprotein (CD200), found in Homo sapiens (Human).